The sequence spans 86 residues: Candiduxin-1 (86 aa).

Residues 1–21 (MKTLLLTLVVLTIACLDLGYT) form the signal peptide. Disulfide bonds link cysteine 24–cysteine 45, cysteine 38–cysteine 62, cysteine 66–cysteine 78, and cysteine 79–cysteine 84.

This sequence belongs to the three-finger toxin family. Short-chain subfamily. Orphan group IX sub-subfamily. Expressed by the venom gland.

The protein resides in the secreted. In Bungarus candidus (Malayan krait), this protein is Candiduxin-1.